The chain runs to 112 residues: Prostatic steroid-binding protein C2 (112 aa).

Residues 1–20 (MRLSLCLLTILVVCCYEANG) form the signal peptide. Residue glutamine 21 is modified to Pyrrolidone carboxylic acid.

The protein belongs to the secretoglobin family. Lipophilin subfamily. As to quaternary structure, prostatein is composed of three different peptides called C1, C2 and C3. These form covalent C1:C3 (F) and C2:C3 (S) heterodimers whose noncovalent association forms tetrameric (C1:C3/C3:C2) prostatein molecules. Post-translationally, linked by three disulfide bonds to C3. In terms of processing, the N-terminus is blocked.

It is found in the secreted. Part of prostatein which is the major secretory glycoprotein of ventral prostate gland. The sequence is that of Prostatic steroid-binding protein C2 (Psbpc2) from Rattus norvegicus (Rat).